We begin with the raw amino-acid sequence, 310 residues long: UPF0282 protein PF0593 (310 aa).

This sequence belongs to the UPF0282 family.

The chain is UPF0282 protein PF0593 from Pyrococcus furiosus (strain ATCC 43587 / DSM 3638 / JCM 8422 / Vc1).